Consider the following 302-residue polypeptide: Pantothenate synthetase (302 aa).

Residue 30 to 37 (MGALHGGH) coordinates ATP. His37 serves as the catalytic Proton donor. (R)-pantoate is bound at residue Gln61. A beta-alanine-binding site is contributed by Gln61. Position 147–150 (147–150 (GEKD)) interacts with ATP. Gln153 lines the (R)-pantoate pocket. Residues Val176 and 184-187 (KSSR) contribute to the ATP site.

This sequence belongs to the pantothenate synthetase family. As to quaternary structure, homodimer.

It localises to the cytoplasm. It carries out the reaction (R)-pantoate + beta-alanine + ATP = (R)-pantothenate + AMP + diphosphate + H(+). It functions in the pathway cofactor biosynthesis; (R)-pantothenate biosynthesis; (R)-pantothenate from (R)-pantoate and beta-alanine: step 1/1. In terms of biological role, catalyzes the condensation of pantoate with beta-alanine in an ATP-dependent reaction via a pantoyl-adenylate intermediate. The sequence is that of Pantothenate synthetase from Shouchella clausii (strain KSM-K16) (Alkalihalobacillus clausii).